Consider the following 192-residue polypeptide: UPF0149 protein KPN78578_32810 (192 aa).

The protein belongs to the UPF0149 family.

This is UPF0149 protein KPN78578_32810 from Klebsiella pneumoniae subsp. pneumoniae (strain ATCC 700721 / MGH 78578).